The primary structure comprises 174 residues: Magnetosome protein MamT (174 aa).

Residues 1-9 (MGTPGGGRR) are Cytoplasmic-facing. The helical transmembrane segment at 10–28 (WMTLISITLLMVVGLGLYW) threads the bilayer. Topologically, residues 29–174 (DELSLSAGIS…EKKSGIKWLL (146 aa)) are lumenal. The MCR (magnetochrome) 1 motif lies at 87 to 107 (VMPGTGMPHPYVGDCIQCHLM). Residues cysteine 101, cysteine 104, histidine 105, cysteine 152, cysteine 155, and histidine 156 each coordinate heme. Positions 138–158 (ILPTTRQPHPPAGRCIKCHDI) match the MCR 2 motif.

The protein belongs to the magnetosome MamT family. It depends on heme as a cofactor.

The protein localises to the magnetosome membrane. In terms of biological role, may play a role in magnetite crystal maturation. May transfer electrons to balance the Fe(2+)-Fe(3+) ratio during magnetite formation. This is Magnetosome protein MamT from Magnetospirillum gryphiswaldense (strain DSM 6361 / JCM 21280 / NBRC 15271 / MSR-1).